Reading from the N-terminus, the 243-residue chain is MDWAAPALTSFVADSSYRHLCCYGAGIAGNVFAFVLFISPLPTFKRIVRNGSTEQFSAMPYIYSLLNCLICMWYGLPFVSYGVVLVATVNSIGAVFQLAYTAVFIAFADAKQRLKVSALLAAVFVVFGLIVFVSLALLDHPTRQMFVGYLSVASLIFMFASPLSIINLVIRTKSVEYMPFYLSLSMFLMSASFFGYGVLLNDFFIYIPNGIGTILGIIQLVLYAYFRKGSSEEAKLPLLVTHT.

The Extracellular portion of the chain corresponds to methionine 1–tyrosine 23. A helical transmembrane segment spans residues glycine 24–phenylalanine 44. A MtN3/slv 1 domain is found at glycine 24–lysine 111. Topologically, residues lysine 45–serine 57 are cytoplasmic. A helical transmembrane segment spans residues alanine 58 to serine 80. The Extracellular portion of the chain corresponds to tyrosine 81–valine 89. The helical transmembrane segment at asparagine 90–alanine 110 threads the bilayer. Over lysine 111 to serine 117 the chain is Cytoplasmic. The chain crosses the membrane as a helical span at residues alanine 118–leucine 138. Topologically, residues aspartate 139–methionine 145 are extracellular. The chain crosses the membrane as a helical span at residues phenylalanine 146–isoleucine 166. The 84-residue stretch at valine 147–serine 230 folds into the MtN3/slv 2 domain. At asparagine 167–proline 179 the chain is on the cytoplasmic side. The helical transmembrane segment at phenylalanine 180 to leucine 200 threads the bilayer. Residues asparagine 201 to aspartate 202 are Extracellular-facing. A helical membrane pass occupies residues phenylalanine 203–tyrosine 223. Over alanine 224–threonine 243 the chain is Cytoplasmic.

The protein belongs to the SWEET sugar transporter family. In terms of assembly, forms homooligomers and/or heterooligomers.

It localises to the cell membrane. Its function is as follows. Mediates both low-affinity uptake and efflux of sugar across the plasma membrane. The protein is Bidirectional sugar transporter SWEET2a of Sorghum bicolor (Sorghum).